The following is a 759-amino-acid chain: 5-methyltetrahydropteroyltriglutamate--homocysteine methyltransferase (759 aa).

Residues 17-20 (RELK) and K116 contribute to the 5-methyltetrahydropteroyltri-L-glutamate site. L-homocysteine-binding positions include 430–432 (IGS) and E483. Residues 430–432 (IGS) and E483 each bind L-methionine. 5-methyltetrahydropteroyltri-L-glutamate-binding positions include 514–515 (RC) and W560. D598 contributes to the L-homocysteine binding site. An L-methionine-binding site is contributed by D598. Residue E604 participates in 5-methyltetrahydropteroyltri-L-glutamate binding. 3 residues coordinate Zn(2+): H641, C643, and E665. H694 serves as the catalytic Proton donor. C726 lines the Zn(2+) pocket.

Belongs to the vitamin-B12 independent methionine synthase family. The cofactor is Zn(2+).

It catalyses the reaction 5-methyltetrahydropteroyltri-L-glutamate + L-homocysteine = tetrahydropteroyltri-L-glutamate + L-methionine. The protein operates within amino-acid biosynthesis; L-methionine biosynthesis via de novo pathway; L-methionine from L-homocysteine (MetE route): step 1/1. Functionally, catalyzes the transfer of a methyl group from 5-methyltetrahydrofolate to homocysteine resulting in methionine formation. This chain is 5-methyltetrahydropteroyltriglutamate--homocysteine methyltransferase, found in Lactococcus lactis subsp. lactis (strain IL1403) (Streptococcus lactis).